A 148-amino-acid chain; its full sequence is Ribosome maturation factor RimP (148 aa).

The protein belongs to the RimP family.

The protein resides in the cytoplasm. Its function is as follows. Required for maturation of 30S ribosomal subunits. The polypeptide is Ribosome maturation factor RimP (Nautilia profundicola (strain ATCC BAA-1463 / DSM 18972 / AmH)).